Reading from the N-terminus, the 395-residue chain is NAD(P)H-quinone oxidoreductase subunit H, chloroplastic (395 aa).

This sequence belongs to the complex I 49 kDa subunit family. In terms of assembly, NDH is composed of at least 16 different subunits, 5 of which are encoded in the nucleus.

Its subcellular location is the plastid. The protein localises to the chloroplast thylakoid membrane. The enzyme catalyses a plastoquinone + NADH + (n+1) H(+)(in) = a plastoquinol + NAD(+) + n H(+)(out). It catalyses the reaction a plastoquinone + NADPH + (n+1) H(+)(in) = a plastoquinol + NADP(+) + n H(+)(out). In terms of biological role, NDH shuttles electrons from NAD(P)H:plastoquinone, via FMN and iron-sulfur (Fe-S) centers, to quinones in the photosynthetic chain and possibly in a chloroplast respiratory chain. The immediate electron acceptor for the enzyme in this species is believed to be plastoquinone. Couples the redox reaction to proton translocation, and thus conserves the redox energy in a proton gradient. The chain is NAD(P)H-quinone oxidoreductase subunit H, chloroplastic from Citrus sinensis (Sweet orange).